The primary structure comprises 834 residues: DNA gyrase subunit A (834 aa).

A Topo IIA-type catalytic domain is found at 53-520; the sequence is LPDVRDGLKP…NDTEIDEEDL (468 aa). Tyr141 acts as the O-(5'-phospho-DNA)-tyrosine intermediate in catalysis. Positions 547–553 match the GyrA-box motif; sequence QGRGGVG.

The protein belongs to the type II topoisomerase GyrA/ParC subunit family. Heterotetramer, composed of two GyrA and two GyrB chains. In the heterotetramer, GyrA contains the active site tyrosine that forms a transient covalent intermediate with DNA, while GyrB binds cofactors and catalyzes ATP hydrolysis.

It localises to the cytoplasm. The enzyme catalyses ATP-dependent breakage, passage and rejoining of double-stranded DNA.. Functionally, a type II topoisomerase that negatively supercoils closed circular double-stranded (ds) DNA in an ATP-dependent manner to modulate DNA topology and maintain chromosomes in an underwound state. Negative supercoiling favors strand separation, and DNA replication, transcription, recombination and repair, all of which involve strand separation. Also able to catalyze the interconversion of other topological isomers of dsDNA rings, including catenanes and knotted rings. Type II topoisomerases break and join 2 DNA strands simultaneously in an ATP-dependent manner. The protein is DNA gyrase subunit A of Brachyspira hyodysenteriae (strain ATCC 49526 / WA1).